The following is a 284-amino-acid chain: Bifunctional protein FolD (284 aa).

NADP(+) is bound by residues 166 to 168 (GAS) and Ile-232.

It belongs to the tetrahydrofolate dehydrogenase/cyclohydrolase family. Homodimer.

It catalyses the reaction (6R)-5,10-methylene-5,6,7,8-tetrahydrofolate + NADP(+) = (6R)-5,10-methenyltetrahydrofolate + NADPH. The enzyme catalyses (6R)-5,10-methenyltetrahydrofolate + H2O = (6R)-10-formyltetrahydrofolate + H(+). Its pathway is one-carbon metabolism; tetrahydrofolate interconversion. Functionally, catalyzes the oxidation of 5,10-methylenetetrahydrofolate to 5,10-methenyltetrahydrofolate and then the hydrolysis of 5,10-methenyltetrahydrofolate to 10-formyltetrahydrofolate. This Shewanella sp. (strain MR-7) protein is Bifunctional protein FolD.